We begin with the raw amino-acid sequence, 454 residues long: Transcription factor efuD (454 aa).

Residues 4 to 111 enclose the HTH TFE/IIEalpha-type domain; sequence AKELIRITAR…NYHRAIDSIK (108 aa). The disordered stretch occupies residues 327–454; it reads LRTDDDGAMD…DEDELEFEDI (128 aa). Acidic residues predominate over residues 353–372; that stretch reads DQDEEEEEEDDDDDEFEDVD. The segment covering 387–401 has biased composition (polar residues); it reads SVSTPATSAQVSSTA. Residues 423-437 show a composition bias toward low complexity; it reads APAAAASSQAAAAES. Over residues 442 to 454 the composition is skewed to acidic residues; that stretch reads SDEDEDELEFEDI.

Belongs to the TFIIE alpha subunit family.

The protein resides in the nucleus. Transcription factor; part of the gene cluster that mediates the biosynthesis of enfumafungin, a glycosylated fernene-type triterpenoid with potent antifungal activity, mediated by its interaction with beta-1,3-glucan synthase and the fungal cell wall. Is possibly responsible for the transcription regulation of one or more genes within the gene cluster. The protein is Transcription factor efuD of Hormonema carpetanum.